The following is a 1067-amino-acid chain: Ubiquitin conjugation factor E4 A (1067 aa).

The segment at 33-57 (KEQLKQQSDELPASPDDSDNSVSES) is disordered. Position 386 is an N6-acetyllysine (K386). Residues 987 to 1061 (DACDEFLDPI…QRWLAERKQQ (75 aa)) enclose the U-box domain.

The protein belongs to the ubiquitin conjugation factor E4 family.

It is found in the cytoplasm. It carries out the reaction S-ubiquitinyl-[E2 ubiquitin-conjugating enzyme]-L-cysteine + [acceptor protein]-L-lysine = [E2 ubiquitin-conjugating enzyme]-L-cysteine + N(6)-ubiquitinyl-[acceptor protein]-L-lysine.. It participates in protein modification; protein ubiquitination. In terms of biological role, ubiquitin-protein ligase that probably functions as an E3 ligase in conjunction with specific E1 and E2 ligases. May also function as an E4 ligase mediating the assembly of polyubiquitin chains on substrates ubiquitinated by another E3 ubiquitin ligase. Mediates 'Lys-48'-linked polyubiquitination of substrates. This is Ubiquitin conjugation factor E4 A from Bos taurus (Bovine).